We begin with the raw amino-acid sequence, 1347 residues long: MNKVEAGNELGFRVGFSGHGGHLRVEPFYTAERDDALNSLPDFVSPPAFAKETKESIKKHIEEKYLIPRLEPDQFSAEKAENQWDFDWFSRVKMPLQPSLPRSVVVPTWELPFRRQKEDTENGAWEPKSVEVDLSEQMYGDQDSGFFPRMVGPPKDFLRGSVNNRPFRPGGLEDSQSSERVLPEGVSSGQWVQELLNGGPAQTVPPSFKQSLDLGDLMPYPQTWSVYEDHSSHGNASDENSSKLSIQFDDLFKKAWEEDTFSELEGDDHTAGSESPKAEAEPDAKASISNEVSKGLETDVTVLDEILSSAKTAIMSEEAVTGSSDKQLRKEGWATKGDSQDIADRFYELVPDMAIEFPFELDNFQKEAICCLEKGESVFVAAHTSAGKTVVAEYAFALATKHCTRAVYTAPIKTISNQKYRDFCGKFDVGLLTGDVSIRPEASCLIMTTEILRSMLYRGADIIRDIEWVIFDEVHYVNDVERGVVWEEVIIMLPRHINFVLLSATVPNTFEFADWIGRTKQKEIRVTGTTKRPVPLEHCLFYSGELYKVCENEVFLSKGIKDAKDSQKKKNSNAVSVAPKQQMGSSAHQDGSKSQKHEAHSRGKQNKHSSVKDVGKSSYSGNSQNNGAFRRSAASNWLLLINKLSKMSLLPVVVFCFSKNYCDRCADALTGTDLTSSSEKSEIRVFCDKAFSRLKGSDRNLPQVLRLQSLLHRGIGVHHAGLLPIVKEVVEMLFCRGVIKVLFSTETFAMGVNAPARTVVFDALRKFDGKEFRQLLPGEYTQMAGRAGRRGLDKTGTVVVMCRDEVPDESDLRRVIVGSATRLESQFRLTYIMILHLLRVEELKVEDMLKRSFAEFHAQKKLPEKQQLLMIKRSLPTKHIECIKGEPAIEDYYDMYMEANEYNNKMSEAVMQSPYAQSFLVQGRVVVMKSGMGIDNLLGIVLKGPSNTNRQYVVLVIKSEIPPPEKNMVSIGKKSSDPSQGYFIAPKSKRGFEEEFYTKPSSRKGPVVIKIELPYHGVAAGVGYEVKGFDNKEFLCICDSKIKIDQVRLLEDGNKAAFSQTVQQLLDLKSDGNKFPPALDPVKDLKLKDAELVETYYKWTNLLQKMSMNKCHGCVKLEEHMKLAREIKKHKTDLKDLEFQMSDEALLQMPAFQGRIDVLKNIGCIDDDLVVQIKGRVACEMNSGEELICTVCLFENQFEELEPEEAVAIMSAFVFQQKNTSAPTLTPKLAKAKQRLYDTAIRLGELQAQYNLQIDPEEYAQENLKFGLVEVVYEWAKGTPFAEICELTDVPEGLIVRTIVRLDETCREFKNAAAIMGNSALHKKMDAASNAIKRDIVFAASLYVTGV.

Positions 263–291 (ELEGDDHTAGSESPKAEAEPDAKASISNE) are disordered. The span at 267–284 (DDHTAGSESPKAEAEPDA) shows a compositional bias: basic and acidic residues. In terms of domain architecture, Helicase ATP-binding spans 369–524 (ICCLEKGESV…WIGRTKQKEI (156 aa)). 382–389 (AHTSAGKT) contributes to the ATP binding site. The short motif at 472 to 475 (DEVH) is the DEVH box element. The segment at 566–625 (SQKKKNSNAVSVAPKQQMGSSAHQDGSKSQKHEAHSRGKQNKHSSVKDVGKSSYSGNSQN) is disordered. Basic and acidic residues predominate over residues 590–601 (DGSKSQKHEAHS). In terms of domain architecture, Helicase C-terminal spans 673–838 (DLTSSSEKSE…LTYIMILHLL (166 aa)).

Belongs to the DExH box helicase family. SKI2 subfamily. As to quaternary structure, component of the cytoplasmic SKI complex, which consists of SKI2, SKI3 and VIP3/SKI8. Expressed in vascular tissues of leaves and roots of young plants.

The protein localises to the cytoplasm. It carries out the reaction ATP + H2O = ADP + phosphate + H(+). Functionally, component of the SKI complex which is thought to be involved in exosome-mediated RNA decay and associates with transcriptionally active genes in a manner dependent on PAF1 complex (PAF1C). Involved in the regulation of potassium deprivation stress response. The polypeptide is DExH-box ATP-dependent RNA helicase DExH11 (Arabidopsis thaliana (Mouse-ear cress)).